A 193-amino-acid polypeptide reads, in one-letter code: Large ribosomal subunit protein uL18 (193 aa).

The protein belongs to the universal ribosomal protein uL18 family. Part of the 50S ribosomal subunit. Contacts the 5S and 23S rRNAs.

Its function is as follows. This is one of the proteins that bind and probably mediate the attachment of the 5S RNA into the large ribosomal subunit, where it forms part of the central protuberance. The chain is Large ribosomal subunit protein uL18 from Methanosphaera stadtmanae (strain ATCC 43021 / DSM 3091 / JCM 11832 / MCB-3).